An 89-amino-acid polypeptide reads, in one-letter code: Long neurotoxin homolog Pa ID (89 aa).

An N-terminal signal peptide occupies residues 1-21; sequence MKTLLLTLVVVTIMCLDLGYT. Intrachain disulfides connect C24-C42, C35-C63, C48-C52, C67-C78, and C79-C84.

This sequence belongs to the three-finger toxin family. Long-chain subfamily. Type II alpha-neurotoxin sub-subfamily. Expressed by the venom gland.

The protein localises to the secreted. Functionally, binds with high affinity to muscular (alpha-1/CHRNA1) and neuronal (alpha-7/CHRNA7) nicotinic acetylcholine receptor (nAChR) and inhibits acetylcholine from binding to the receptor, thereby impairing neuromuscular and neuronal transmission. This is Long neurotoxin homolog Pa ID from Pseudechis australis (Mulga snake).